Reading from the N-terminus, the 219-residue chain is Flagellar transcriptional regulator FlhC (219 aa).

C137, C140, C157, and C160 together coordinate Zn(2+).

This sequence belongs to the FlhC family. Heterohexamer composed of two FlhC and four FlhD subunits. Each FlhC binds a FlhD dimer, forming a heterotrimer, and a hexamer assembles by dimerization of two heterotrimers. The cofactor is Zn(2+).

The protein resides in the cytoplasm. Functions in complex with FlhD as a master transcriptional regulator that regulates transcription of several flagellar and non-flagellar operons by binding to their promoter region. Activates expression of class 2 flagellar genes, including fliA, which is a flagellum-specific sigma factor that turns on the class 3 genes. Also regulates genes whose products function in a variety of physiological pathways. This chain is Flagellar transcriptional regulator FlhC, found in Paraburkholderia phymatum (strain DSM 17167 / CIP 108236 / LMG 21445 / STM815) (Burkholderia phymatum).